The chain runs to 168 residues: Skp-like protein (168 aa).

The signal sequence occupies residues 1 to 22 (MRKFTQFVLITAAIMAAPSAFA).

This sequence belongs to the Skp family.

The polypeptide is Skp-like protein (Pseudomonas aeruginosa (strain ATCC 15692 / DSM 22644 / CIP 104116 / JCM 14847 / LMG 12228 / 1C / PRS 101 / PAO1)).